Consider the following 234-residue polypeptide: Urease accessory protein UreF (234 aa).

Belongs to the UreF family. As to quaternary structure, ureD, UreF and UreG form a complex that acts as a GTP-hydrolysis-dependent molecular chaperone, activating the urease apoprotein by helping to assemble the nickel containing metallocenter of UreC. The UreE protein probably delivers the nickel.

Its subcellular location is the cytoplasm. In terms of biological role, required for maturation of urease via the functional incorporation of the urease nickel metallocenter. The chain is Urease accessory protein UreF from Kocuria rhizophila (strain ATCC 9341 / DSM 348 / NBRC 103217 / DC2201).